Reading from the N-terminus, the 344-residue chain is Putative [LysW]-lysine/[LysW]-ornithine hydrolase (344 aa).

His66 contacts Zn(2+). The active site involves Asp68. Residue Asp90 coordinates Zn(2+). The active-site Proton acceptor is Glu117. Zn(2+) is bound by residues Glu118, Glu139, and His297.

Belongs to the peptidase M20A family. LysK subfamily. It depends on Zn(2+) as a cofactor. Co(2+) serves as cofactor.

The protein localises to the cytoplasm. It carries out the reaction [amino-group carrier protein]-C-terminal-gamma-(L-lysyl)-L-glutamate + H2O = [amino-group carrier protein]-C-terminal-L-glutamate + L-lysine. The enzyme catalyses [amino-group carrier protein]-C-terminal-gamma-(L-ornithyl)-L-glutamate + H2O = [amino-group carrier protein]-C-terminal-L-glutamate + L-ornithine. Its pathway is amino-acid biosynthesis; L-lysine biosynthesis via AAA pathway; L-lysine from L-alpha-aminoadipate (Thermus route): step 5/5. It functions in the pathway amino-acid biosynthesis; L-arginine biosynthesis. Catalyzes the release of L-lysine from [LysW]-gamma-L-lysine and the release of L-ornithine from [LysW]-L-ornithine. The polypeptide is Putative [LysW]-lysine/[LysW]-ornithine hydrolase (Thermococcus kodakarensis (strain ATCC BAA-918 / JCM 12380 / KOD1) (Pyrococcus kodakaraensis (strain KOD1))).